Here is an 85-residue protein sequence, read N- to C-terminus: U4-theraphotoxin-Hhn1c (85 aa).

The signal sequence occupies residues 1–22 (MKVTLIAIVTCAAVLVLHTTAA). Positions 23–48 (EELEAESQLMEVGMPDTELAAVDEER) are excised as a propeptide. Disulfide bonds link cysteine 52/cysteine 66, cysteine 56/cysteine 77, and cysteine 71/cysteine 82.

This sequence belongs to the neurotoxin 12 (Hwtx-2) family. 02 (Hwtx-2) subfamily. Expressed by the venom gland.

Its subcellular location is the secreted. Functionally, postsynaptic neurotoxin. This chain is U4-theraphotoxin-Hhn1c, found in Cyriopagopus hainanus (Chinese bird spider).